A 557-amino-acid polypeptide reads, in one-letter code: Formate--tetrahydrofolate ligase (557 aa).

65–72 lines the ATP pocket; it reads TPAGEGKT.

It belongs to the formate--tetrahydrofolate ligase family.

The catalysed reaction is (6S)-5,6,7,8-tetrahydrofolate + formate + ATP = (6R)-10-formyltetrahydrofolate + ADP + phosphate. Its pathway is one-carbon metabolism; tetrahydrofolate interconversion. This chain is Formate--tetrahydrofolate ligase, found in Methylorubrum extorquens (strain CM4 / NCIMB 13688) (Methylobacterium extorquens).